The primary structure comprises 415 residues: MEQIWLLLLLTIRVLPGSAQFNGYNCDANLHSRFPAERDISVYCGVQAITMKINFCTVLFSGYSETDLALNGRHGDSHCRGFINNNTFPAVVIFIINLSTLEGCGNNLVVSTIPGVSAYGNATSVQVGNISGYIDTPDPPTIISYLPGLLYKFSCSYPLEYLVNNTQLASSSAAISVRENNGTFVSTLNLLLYNDSTYNQQLIIPSIGLPLKTKVFAAVQATNLDGRWNVLMDYCYTTPSGNPNDDIRYDLFLSCDKDPQTTVIENGRSQRGRFSFEVFRFVKHKNQKMSTVFLHCVTKLCRADDCPFLMPICSHRERRDAGRRTTWSPQSSSGSAVLSAGPIITRSDETPTNNSQLGSPSMPPFQLNAITSALISGMVILGVTSFSLLLCSLALLHRKGPTSLVLNGIRNPVFD.

The N-terminal stretch at 1 to 19 is a signal peptide; that stretch reads MEQIWLLLLLTIRVLPGSA. At 20-372 the chain is on the extracellular side; sequence QFNGYNCDAN…PPFQLNAITS (353 aa). Residues 43-320 enclose the ZP domain; the sequence is YCGVQAITMK…PICSHRERRD (278 aa). 2 cysteine pairs are disulfide-bonded: Cys-44-Cys-155 and Cys-79-Cys-104. Residues Asn-121 and Asn-164 are each glycosylated (N-linked (GlcNAc...) asparagine). Intrachain disulfides connect Cys-235/Cys-296 and Cys-255/Cys-313. The tract at residues 323–360 is disordered; that stretch reads RRTTWSPQSSSGSAVLSAGPIITRSDETPTNNSQLGSP. 2 stretches are compositionally biased toward polar residues: residues 325 to 336 and 350 to 359; these read TTWSPQSSSGSA and TPTNNSQLGS. A helical membrane pass occupies residues 373–393; it reads ALISGMVILGVTSFSLLLCSL. At 394-415 the chain is on the cytoplasmic side; that stretch reads ALLHRKGPTSLVLNGIRNPVFD.

Proteolytically cleaved before the transmembrane segment to yield the secreted form found in the extracellular matrix of the cupula. As to expression, detected in placenta, kidney, lung, pancreas and at very low level in other tissues.

The protein localises to the cytoplasmic vesicle membrane. It localises to the secreted. Its subcellular location is the extracellular space. The protein resides in the extracellular matrix. Its function is as follows. Glycoprotein which is a component of the gelatinous extracellular matrix in the cupulae of the vestibular organ. The chain is Zona pellucida-like domain-containing protein 1 (ZPLD1) from Homo sapiens (Human).